A 172-amino-acid chain; its full sequence is Galectin-related protein (172 aa).

Ala2 is subject to N-acetylalanine. 2 positions are modified to phosphoserine: Ser22 and Ser25. Positions 39-168 (PFCGHIKGGM…TIKINGDLQI (130 aa)) constitute a Galectin domain.

In terms of assembly, monomer.

In terms of biological role, does not bind lactose, and may not bind carbohydrates. The protein is Galectin-related protein (Lgalsl) of Mus musculus (Mouse).